Here is a 736-residue protein sequence, read N- to C-terminus: MSSESKEPHVLSPKDSFEGNDRYSPPSRIHLELEKKSSTDFKQFEASEPCRPYPRIHMEPQEKSNTNFKQFVIKKLQKSCQCSPTKAKNMIFGFLPVLQWLPKYDLKKNILGDVMSGLIVGILLVPQSIAYSLLAGQEPIYGLYTSFFASLIYFLLGTSRHISVGIFGVLCLMIGEVVDRELLKAGYDTVHIAPSLGMVSNGSTSLNQTSDRICDRSCYAIKVGSTVTFLAGIYQVAMGFFQVGFVSVYLSDALLSGFVTGASFTILTSQAKYLLGLSLPRSSGVGSLITTWIHIFRNIHKTNVCDLITSLLCLLVLLPTKELNEHFKSKLKAPIPTELVVVVAATLASHFGKLHEKYNTSIAGHIPTGFMPPKAPDWNLIPSVAVDAIAISIIGFAITVSLSEMFAKKHGYTVKANQEMYAIGFCNIIPSFFHCFTTSAALAKTLVKESTGCQSQLSGVMTALVLLLVLLVIAPLFYSLQKSVLGVITIVNLRGALRKFRDLPKMWRVSRMDTVIWFVTMLSSALISTELGLLIGVCFSMFCVILRTQKPKVSLLGLVEETEIFESMSAYKNLQARPGIKIFRFVAPLYYINKECFKSALYKKTLNPVLVKAAQKKAAKRKIKKQPVTLSGIQNEISVQLSHDPLELRTIVIDCSAIQFLDTAGIHTLKEVRRDYEAIGIQVLLAQCNPSVRDSLARGEYCKDEEENLLFYSVYEAMAFAEESQNQKGICIPNGL.

A disordered region spans residues 1–28; that stretch reads MSSESKEPHVLSPKDSFEGNDRYSPPSR. A phosphoserine mark is found at S12 and S16. Transmembrane regions (helical) follow at residues 114–134 and 139–159; these read VMSG…YSLL and PIYG…LGTS. N201 and N207 each carry an N-linked (GlcNAc...) asparagine glycan. Transmembrane regions (helical) follow at residues 229–249, 257–277, 380–400, 422–442, 457–477, and 526–546; these read FLAG…VSVY, GFVT…LLGL, LIPS…AITV, AIGF…SAAL, LSGV…APLF, and LIST…CVIL. The STAS domain occupies 570–721; the sequence is AYKNLQARPG…YSVYEAMAFA (152 aa).

It belongs to the SLC26A/SulP transporter (TC 2.A.53) family. N-glycosylated.

Its subcellular location is the cell membrane. The protein resides in the apical cell membrane. The enzyme catalyses oxalate(in) + sulfate(out) = oxalate(out) + sulfate(in). The catalysed reaction is sulfate(out) + 2 chloride(in) = sulfate(in) + 2 chloride(out). It catalyses the reaction oxalate(out) + 2 chloride(in) = oxalate(in) + 2 chloride(out). It carries out the reaction bromide(in) + chloride(out) = bromide(out) + chloride(in). The enzyme catalyses nitrate(in) + chloride(out) = nitrate(out) + chloride(in). The catalysed reaction is iodide(in) + chloride(out) = iodide(out) + chloride(in). In terms of biological role, sulfate transporter which mediates sulfate uptake into chondrocytes in order to maintain adequate sulfation of proteoglycans which is needed for cartilage development. Mediates electroneutral anion exchange of sulfate ions for oxalate ions, sulfate and oxalate ions for chloride and/or hydroxyl ions and chloride ions for bromide, iodide and nitrate ions. The coupling of sulfate transport to both hydroxyl and chloride ions likely serves to ensure transport at both acidic pH when most sulfate uptake is mediated by sulfate-hydroxide exchange and alkaline pH when most sulfate uptake is mediated by sulfate-chloride exchange. Essential for chondrocyte proliferation, differentiation and cell size expansion. This chain is Sulfate transporter (SLC26A2), found in Equus caballus (Horse).